Here is a 1235-residue protein sequence, read N- to C-terminus: Chitin synthase 4 (1235 aa).

Over residues 1–11 (MSLPRRPGPSP) the composition is skewed to pro residues. Residues 1–203 (MSLPRRPGPS…ASKGKREKSG (203 aa)) are disordered. Topologically, residues 1–212 (MSLPRRPGPS…GGLPTPSFWN (212 aa)) are cytoplasmic. Positions 19 to 28 (YRQSGSRRSR) are enriched in basic residues. Over residues 46-59 (PSQQQRVPSISSFP) the composition is skewed to polar residues. Positions 94–107 (IRPERNRIGKDHPN) are enriched in basic and acidic residues. Over residues 116-125 (NMNTLPSSTG) the composition is skewed to polar residues. Basic and acidic residues predominate over residues 169–187 (ETEKSGDERRRRRKSDTTK). The segment covering 188-199 (HGKIVKASKGKR) has biased composition (basic residues). Residues 213–233 (IYCGFVTFWCPGFVLKCFGMP) traverse the membrane as a helical segment. Residues 234–244 (EMAQQRAWREK) lie on the Extracellular side of the membrane. Residues 245 to 265 (MGLISIILLIMGFVGFITFGF) traverse the membrane as a helical segment. Over 266–514 (TQVVCGKPPL…ASKVVLYVSL (249 aa)) the chain is Cytoplasmic. A helical transmembrane segment spans residues 515 to 535 (VLILAVVLARFVLALIFQWFI). Residues 536–1065 (SKTYAAAKTS…SMQFIVGIEL (530 aa)) lie on the Extracellular side of the membrane. A disordered region spans residues 545–592 (SQTSDQRKRNRQIEDWTEDIYRAPPRLPGEVGSSVAGSSDRQSKRSSA). A compositionally biased stretch (basic and acidic residues) spans 549-558 (DQRKRNRQIE). The N-linked (GlcNAc...) asparagine glycan is linked to N639. The disordered stretch occupies residues 645-670 (FLKSDAYGSSSSPADGPGPAGFIHEA). The span at 648–665 (SDAYGSSSSPADGPGPAG) shows a compositional bias: low complexity. The N-linked (GlcNAc...) asparagine glycan is linked to N1034. Residues 1066-1086 (IGTLVLPAAIAFTFYVVIISI) traverse the membrane as a helical segment. Residues 1087–1092 (INSPPQ) are Cytoplasmic-facing. A helical transmembrane segment spans residues 1093 to 1113 (IIPLVLLGLILGLPAILVVVT). Over 1114–1116 (AHS) the chain is Extracellular. The helical transmembrane segment at 1117–1137 (WSYIIWMFIYLLSLPVWNFVL) threads the bilayer. Over 1138-1235 (PTYAFWKFDD…RHFDDYFSDA (98 aa)) the chain is Cytoplasmic. Residues 1201–1235 (RDNVISGVGGSNGWGSSQPRGHEQGRHFDDYFSDA) form a disordered region. Residues 1220–1235 (RGHEQGRHFDDYFSDA) are compositionally biased toward basic and acidic residues.

This sequence belongs to the chitin synthase family. Class IV subfamily.

Its subcellular location is the cell membrane. The catalysed reaction is [(1-&gt;4)-N-acetyl-beta-D-glucosaminyl](n) + UDP-N-acetyl-alpha-D-glucosamine = [(1-&gt;4)-N-acetyl-beta-D-glucosaminyl](n+1) + UDP + H(+). In terms of biological role, polymerizes chitin, a structural polymer of the cell wall and septum, by transferring the sugar moiety of UDP-GlcNAc to the non-reducing end of the growing chitin polymer. The sequence is that of Chitin synthase 4 (chs-4) from Neurospora crassa (strain ATCC 24698 / 74-OR23-1A / CBS 708.71 / DSM 1257 / FGSC 987).